We begin with the raw amino-acid sequence, 124 residues long: Large ribosomal subunit protein bL19 (124 aa).

The protein belongs to the bacterial ribosomal protein bL19 family.

Its function is as follows. This protein is located at the 30S-50S ribosomal subunit interface and may play a role in the structure and function of the aminoacyl-tRNA binding site. This chain is Large ribosomal subunit protein bL19, found in Orientia tsutsugamushi (strain Ikeda) (Rickettsia tsutsugamushi).